The chain runs to 429 residues: Saccharopine dehydrogenase-like oxidoreductase (429 aa).

Residue Ala-2 is modified to N-acetylalanine. Ser-217 is subject to Phosphoserine.

This sequence belongs to the saccharopine dehydrogenase family.

The sequence is that of Saccharopine dehydrogenase-like oxidoreductase (SCCPDH) from Bos taurus (Bovine).